The primary structure comprises 188 residues: Insulin-like peptide INSL6 (188 aa).

The first 22 residues, 1–22, serve as a signal peptide directing secretion; sequence MKQLCCSCLLWLGLLLAPFSQE. 3 disulfide bridges follow: Cys33–Cys169, Cys45–Cys182, and Cys168–Cys173. The propeptide at 53–158 is connecting peptide; it reads FSMEEQSPMT…SGLFWGNHPQ (106 aa).

This sequence belongs to the insulin family. As to expression, testis and prostate specific.

It is found in the secreted. Functionally, may have a role in sperm development and fertilization. This is Insulin-like peptide INSL6 (Insl6) from Rattus norvegicus (Rat).